The sequence spans 497 residues: Protein DETOXIFICATION 25 (497 aa).

Helical transmembrane passes span 43–63 (LPST…QAFI), 70–90 (GLAA…GIMA), 121–141 (IVDT…GPIL), 157–177 (IYPW…MQMY), 186–206 (IIGI…WWCV), 216–236 (ALLG…VYVF), 261–281 (LSIS…IIVL), 291–311 (IAIS…NICF), 339–359 (VVLV…LAFG), 381–401 (IVLS…GVAI), 416–436 (SYYA…NFGI), and 438–458 (GLWS…CYVI).

It belongs to the multi antimicrobial extrusion (MATE) (TC 2.A.66.1) family.

Its subcellular location is the membrane. In Arabidopsis thaliana (Mouse-ear cress), this protein is Protein DETOXIFICATION 25.